A 415-amino-acid chain; its full sequence is MHNLIKDLKARNLINNITNEEKLKKALAENKGIYVGFDPSADSLHLGNYIMIMLLKRFRLHNIKTFALVGGATGMIGDPSGKSAERNLLDKTILEHNITKIKYQLEKFTNSQVINNYDFYKNMTFLDFLRDVGKLININYLLEKEIISSRLDVGISYTEFSYNLLQGYDFLQLYKNDNIAIQAGGSDQWGNITTGIEIIRKSLGDDNIACGLTINLLTNSEGKKFGKSEKGAIYLDENKSSVYEMYQFLINQTDADVEKLLNFLTLIDVDEINKIMQAHKENPALRIAQKALAQAVVVDVHGQQKYEQALHISQVLFNGNINELNQEEFNIAIKSLPTTKLDKDEIKIIDLLNLANISSSNRVARDFLSTGSILVNDIKVNDENFLVKKQDAINQEFSIIKKGKRNYFLIVWNKD.

Residue tyrosine 34 coordinates L-tyrosine. The short motif at 39–48 (PSADSLHLGN) is the 'HIGH' region element. Tyrosine 162 and glutamine 166 together coordinate L-tyrosine. Residues 224 to 228 (KFGKS) carry the 'KMSKS' region motif. Lysine 227 serves as a coordination point for ATP. The S4 RNA-binding domain maps to 346–413 (IKIIDLLNLA…KRNYFLIVWN (68 aa)).

This sequence belongs to the class-I aminoacyl-tRNA synthetase family. TyrS type 1 subfamily. Homodimer.

The protein resides in the cytoplasm. The catalysed reaction is tRNA(Tyr) + L-tyrosine + ATP = L-tyrosyl-tRNA(Tyr) + AMP + diphosphate + H(+). In terms of biological role, catalyzes the attachment of tyrosine to tRNA(Tyr) in a two-step reaction: tyrosine is first activated by ATP to form Tyr-AMP and then transferred to the acceptor end of tRNA(Tyr). This chain is Tyrosine--tRNA ligase, found in Ureaplasma urealyticum serovar 10 (strain ATCC 33699 / Western).